The following is a 435-amino-acid chain: Elongation factor 1-alpha (435 aa).

The tr-type G domain maps to 6–231; sequence KVHINLVVIG…DALEPPKRPV (226 aa). Positions 15-22 are G1; sequence GHVDSGKS. 15–22 is a binding site for GTP; that stretch reads GHVDSGKS. Residues 71 to 75 form a G2 region; that stretch reads GITID. The segment at 92-95 is G3; that stretch reads DAPG. GTP-binding positions include 92–96 and 154–157; these read DAPGH and NKMD. A G4 region spans residues 154 to 157; sequence NKMD. The G5 stretch occupies residues 195-197; the sequence is SGF.

The protein belongs to the TRAFAC class translation factor GTPase superfamily. Classic translation factor GTPase family. EF-Tu/EF-1A subfamily.

It localises to the cytoplasm. Its function is as follows. This protein promotes the GTP-dependent binding of aminoacyl-tRNA to the A-site of ribosomes during protein biosynthesis. The sequence is that of Elongation factor 1-alpha from Tetrahymena pyriformis.